The primary structure comprises 525 residues: Probable histidine ammonia-lyase (525 aa).

A cross-link (5-imidazolinone (Ala-Gly)) is located at residues 145–147; the sequence is ASG. Position 146 is a 2,3-didehydroalanine (Ser) (serine 146).

The protein belongs to the PAL/histidase family. Contains an active site 4-methylidene-imidazol-5-one (MIO), which is formed autocatalytically by cyclization and dehydration of residues Ala-Ser-Gly.

The protein resides in the cytoplasm. The catalysed reaction is L-histidine = trans-urocanate + NH4(+). It functions in the pathway amino-acid degradation; L-histidine degradation into L-glutamate; N-formimidoyl-L-glutamate from L-histidine: step 1/3. The sequence is that of Probable histidine ammonia-lyase from Halobacterium salinarum (strain ATCC 29341 / DSM 671 / R1).